Consider the following 428-residue polypeptide: Trigger factor (428 aa).

In terms of domain architecture, PPIase FKBP-type spans 166 to 250 (GDIVTFDFKG…IKNIKEKILP (85 aa)).

It belongs to the FKBP-type PPIase family. Tig subfamily.

It is found in the cytoplasm. It carries out the reaction [protein]-peptidylproline (omega=180) = [protein]-peptidylproline (omega=0). Functionally, involved in protein export. Acts as a chaperone by maintaining the newly synthesized protein in an open conformation. Functions as a peptidyl-prolyl cis-trans isomerase. This chain is Trigger factor, found in Mycoplasma capricolum subsp. capricolum (strain California kid / ATCC 27343 / NCTC 10154).